The sequence spans 1192 residues: MPLKFCMERGFQSHPVRGCLVGASRFLSCIKFLVSINPESKSRATNREVLNELIKLHGKTSLGGKLPAYDGRKSLYTAGSLPFESEEFVVKLIDPEKKDKERAEREYKITIRIAGRTDFYHLQQFLLGRQRDMPQETIQFGHRGDIGEGLECWRGYYQSLRPTQMGLSLNIDISATSFFKPVTVIQFVEEFLNIRDTSRPLSDRDRVKIKKALRGVRIETNHQEDQIRRYKITGITPIPMSQLIFPVDDNGTRKTVVQYFWDRYNYRLKYASWPCLQSGSDSRPVYLPMEVCKIVEGQRYSKKLNNKQVTNILRATCQRPQQREQRIHEMVLHNKYTDDRFAQEFGIKVCNDLVSVPARVLPPPMLKYHDSGREKTCAPSVGQWNMINKKMINGGTVDNWTCLSFSRMRPEEVQRFCGDLIQMCNATGMSFNPRPVVDVRSSNPNNIENALRDVHSRTSELLAREGKGGLQLLIVILLEVSGSYGKIKRVCENDLGIVSQCCLPRHASRPNKQYLENVALKINVKKSQQSSLVLMSHTPPGEDSASSIAAVVASMDWPEITKYRGLVSAQSHRQEIIEDLFSVGKDPVKVVNGGMIREFLIAFRKKTGRRPERIIFYRDGVSEGQFSRVLLHEMDAIRKACASLEEGYLPPVTFVVVQKRHHTRLFPEVHGRRDMTDKSGNILPGTVKDRQICHPTEFYFYLCSHAGIQGTSRPTHYHVLYDENHFTADELQTLTNNLCYIYARCTHAVSVVPPAYYSHLAASHAHCCIKGHSSGSGSTPGNEHDIVKNSAPTLQILVKVLDFQIVPLTMKLKSSAEDIVALALSKHRVSLHDVYVYHGRRVIAKSLTLESLKADRDSTFLIMPRMRGGCNDTIGGFKCIPLEQHIRSLGDSLFEIIWIPPDLRVSGFCSYLIILGKPARKIICQLLKLLEIIHAANRFASRFTIADLVFLPDLGCIAFKKGVKIRWNLRREEYKLNMGDVASIISCWFRFNRRKLEALEAGIHELRPGQGDSPMFVDILVKDLRSPTHETGLSANYRGFYKNCSALRSCSAHMNLFTSLDIRKDFMVGSADWGNFVKALGDIKLPGWYRTAMRSPEMRKVLFFEFNDPHTGELRGKRYRALSVFSWLEFARIFIKHMKKGLCTDKQATALLCVIFSNIVPVVEKKLTYSYRPPAKEKSNESFTVEEILDPS.

Residues 183 to 296 (TVIQFVEEFL…LPMEVCKIVE (114 aa)) form the PAZ domain. Residues 472 to 770 (LLIVILLEVS…AASHAHCCIK (299 aa)) enclose the Piwi domain.

The protein belongs to the argonaute family. Ago subfamily.

Its function is as follows. Probably involved in the RNA silencing pathway. May bind to short RNAs such as microRNAs (miRNAs) or short interfering RNAs (siRNAs), and represses the translation of mRNAs which are complementary to them. This Oryza sativa subsp. japonica (Rice) protein is Protein argonaute 13 (AGO13).